The chain runs to 147 residues: Large ribosomal subunit protein bL9 (147 aa).

Belongs to the bacterial ribosomal protein bL9 family.

Binds to the 23S rRNA. In Thermoanaerobacter pseudethanolicus (strain ATCC 33223 / 39E) (Clostridium thermohydrosulfuricum), this protein is Large ribosomal subunit protein bL9.